Reading from the N-terminus, the 354-residue chain is MGCTLSAEDKAAVERSKMIDRNLREDGEKAAKEVKLLLLGAGESGKSTIVKQMKIIHEDGYSEEECKQYKVVVYSNTIQSIIAIIRAMGRLKIDFGEPARADDARQLFVLAGSAEEGLMTSELAGVIRRLWRDGGVQACFSRSREYQLNDSASYYLNDLDRISQTNYIPTQQDVLRTRVKTTGIVETHFTFKDLYFKMFDVGGQRSERKKWIHCFEGVTAIIFCVALSDYDLVLAEDEEMNRMHESMKLFDSICNNKWFTDTSIILFLNKKDLFEEKIKRSPLTICYPEYTGSNTYEEAAAYIQCQFEDLNRRKDTKEIYTHFTCATDTKNVQFVFDAVTDVIIKNNLKECGLY.

Residue Gly2 is the site of N-myristoyl glycine attachment. Cys3 carries the S-palmitoyl cysteine lipid modification. Positions 32-354 constitute a G-alpha domain; that stretch reads KEVKLLLLGA…KNNLKECGLY (323 aa). The tract at residues 35–48 is G1 motif; the sequence is KLLLLGAGESGKST. Positions 42, 43, 44, 45, 46, 47, 48, 150, 151, 175, 176, 177, 178, 179, 180, 181, 201, 203, 269, 270, 272, 273, 325, 326, and 327 each coordinate GTP. Ser47 contacts Mg(2+). A G2 motif region spans residues 173–181; it reads DVLRTRVKT. Mg(2+) is bound at residue Thr181. A G3 motif region spans residues 196 to 205; that stretch reads FKMFDVGGQR. A G4 motif region spans residues 265–272; it reads ILFLNKKD. The interval 324 to 329 is G5 motif; it reads TCATDT.

It belongs to the G-alpha family. G(i/o/t/z) subfamily. Heterotrimeric G proteins are composed of 3 units; alpha, beta and gamma. The alpha subunit contains the guanine nucleotide binding site. GTP binding causes dissociation of the heterotrimer, liberating the individual subunits so that they can interact with downstream effector proteins. Forms a complex with CCDC88A/GIV and EGFR which leads to enhanced EGFR signaling and triggering of cell migration; ligand stimulation is required for recruitment of GNAI3 to the complex. Interacts (inactive GDP-bound form) with CCDC88A/GIV (via GBA motif); the interaction leads to activation of GNAI3. Interacts (inactive GDP-bound form) with CCDC88C/DAPLE (via GBA motif); the interaction leads to activation of GNAI3. Interacts (inactive GDP-bound form) with NUCB1 (via GBA motif) and NUCB2 (via GBA motif); the interaction leads to activation of GNAI3. Interacts (inactive GDP-bound form) with PLCD4 (via GBA motif); the interaction leads to activation of GNAI3. Interacts with INSR; the interaction is probably mediated by CCDC88A/GIV. Interacts with GPSM1. Interacts (GDP-bound form) with GPSM2 (via GoLoco domains). Does not interact with RGS2. Interacts with RGS8 and RGS10; this strongly enhances the intrinsic GTPase activity. Interacts with RGS16; this strongly enhances the intrinsic GTPase activity. Interacts with RGS12. Interacts (via active GTP- or inactive GDP-bound form) with RGS14. Interacts (via active GTP-bound form) with TRPC5 (via ANK repeats) in a homotetrameric ion channel; the interaction is direct and activates the channel activity. As to expression, ubiquitously expressed.

The protein localises to the cytoplasm. Its subcellular location is the cell membrane. It is found in the cytoskeleton. It localises to the microtubule organizing center. The protein resides in the centrosome. Functionally, heterotrimeric guanine nucleotide-binding proteins (G proteins) function as transducers downstream of G protein-coupled receptors (GPCRs) in numerous signaling cascades. The alpha chain contains the guanine nucleotide binding site and alternates between an active, GTP-bound state and an inactive, GDP-bound state. Signaling by an activated GPCR promotes GDP release and GTP binding. The alpha subunit has a low GTPase activity that converts bound GTP to GDP, thereby terminating the signal. Both GDP release and GTP hydrolysis are modulated by numerous regulatory proteins. Signaling is mediated via effector proteins, such as adenylate cyclase. Inhibits adenylate cyclase activity, leading to decreased intracellular cAMP levels. Stimulates the activity of receptor-regulated K(+) channels. The active GTP-bound form prevents the association of RGS14 with centrosomes and is required for the translocation of RGS14 from the cytoplasm to the plasma membrane. May play a role in cell division. The active GTP-bound form activates the calcium permeant TRPC5 ion channels. This chain is Guanine nucleotide-binding protein G(i) subunit alpha-3 (GNAI3), found in Cavia porcellus (Guinea pig).